The sequence spans 310 residues: Putative HTH-type transcriptional regulatory protein SSO0942 (310 aa).

One can recognise an HTH cro/C1-type domain in the interval 125 to 180 (LKHKREEMGYSIGDVAKFLGVSRKAIYDYEKGDSDVSLEVAEKLIDLFGDDIIGDV). A DNA-binding region (H-T-H motif) is located at residues 136 to 155 (IGDVAKFLGVSRKAIYDYEK).

The sequence is that of Putative HTH-type transcriptional regulatory protein SSO0942 from Saccharolobus solfataricus (strain ATCC 35092 / DSM 1617 / JCM 11322 / P2) (Sulfolobus solfataricus).